The following is a 364-amino-acid chain: Lysophosphatidic acid receptor 1 (364 aa).

Residues 1–50 are Extracellular-facing; sequence MAAASTSSPVISQPQFTAMNEQQCFYNESIAFFYNRSGKYLATEWNTVSK. Intrachain disulfides connect C24/C190 and C188/C195. Residues N27 and N35 are each glycosylated (N-linked (GlcNAc...) asparagine). K39 contacts a 1-acyl-sn-glycero-3-phosphate. Residues 51–75 traverse the membrane as a helical segment; that stretch reads LVMGLGITVCVFIMLANLLVMVAIY. Residues 76–83 are Cytoplasmic-facing; it reads VNRRFHFP. Residues 84–107 form a helical membrane-spanning segment; it reads IYYLMANLAAADFFAGLAYFYLMF. Residues 108 to 121 lie on the Extracellular side of the membrane; sequence NTGPNTRRLTVSTW. Residues 122-144 form a helical membrane-spanning segment; sequence LLRQGLIDTSLTASVANLLAIAI. A 1-acyl-sn-glycero-3-phosphate is bound at residue 124 to 129; it reads RQGLID. Over 145–163 the chain is Cytoplasmic; the sequence is ERHITVFRMQLHTRMSNRR. The helical transmembrane segment at 164 to 184 threads the bilayer; the sequence is VVVVIVVIWTMAIVMGAIPSV. At 185–204 the chain is on the extracellular side; it reads GWNCICDIDHCSNMAPLYSD. Residues 205–225 traverse the membrane as a helical segment; the sequence is SYLVFWAIFNLVTFVVMVVLY. W210 is an a 1-acyl-sn-glycero-3-phosphate binding site. At 226–255 the chain is on the cytoplasmic side; that stretch reads AHIFGYVRQRTMRMSRHSSGPRRNRDTMMS. The helical transmembrane segment at 256 to 280 threads the bilayer; the sequence is LLKTVVIVLGAFIVCWTPGLVLLLL. Residues 281 to 294 lie on the Extracellular side of the membrane; it reads DVCCPQCDVLAYEK. A disulfide bridge connects residues C284 and C287. A helical membrane pass occupies residues 295–315; it reads FFLLLAEFNSAMNPIIYSYRD. The Cytoplasmic segment spans residues 316-364; it reads KEMSATFRQILCCQRNENPNGPTEGSDRSASSLNHTILAGVHSNDHSVV. S341 bears the Phosphoserine mark. T351 bears the Phosphothreonine mark.

Belongs to the G-protein coupled receptor 1 family. As to quaternary structure, interacts with RALA and GRK2. Interacts with GNAQ and GNA13. Interacts with CD14; the interaction is enhanced by exposure to bacterial lipopolysaccharide (LPS). Post-translationally, N-glycosylated. Detected in lung. Detected in oligodendrocytes in corpus callosum in brain cortex (at protein level). Expressed within the embryonic cerebral cortex, where it is enriched in the ventricular zone. In the adult brain, also expressed in oligodendrocytes, as well as Schwann cells of the peripheral nervous system. Expressed in many other tissues, including lung, heart, intestine, spleen, thymus, and stomach. No expression in liver. Detected in kidney and testis. Detected in embryonic fibroblasts. Detected in adult lung fibroblasts and lung endothelial cells. Detected in dorsal root ganglion and dorsal root. Detected in astrocytes. Detected in bone.

The protein resides in the cell surface. The protein localises to the cell membrane. It localises to the endosome. In terms of biological role, receptor for lysophosphatidic acid (LPA). Plays a role in the reorganization of the actin cytoskeleton, cell migration, differentiation and proliferation, and thereby contributes to the responses to tissue damage and infectious agents. Activates downstream signaling cascades via the G(i)/G(o), G(12)/G(13), and G(q) families of heteromeric G proteins. Signaling inhibits adenylyl cyclase activity and decreases cellular cAMP levels. Signaling triggers an increase of cytoplasmic Ca(2+) levels. Activates RALA; this leads to the activation of phospholipase C (PLC) and the formation of inositol 1,4,5-trisphosphate. Signaling mediates activation of down-stream MAP kinases. Contributes to the regulation of cell shape. Promotes Rho-dependent reorganization of the actin cytoskeleton in neuronal cells and neurite retraction. Promotes the activation of Rho and the formation of actin stress fibers. Promotes formation of lamellipodia at the leading edge of migrating cells via activation of RAC1. Through its function as LPA receptor, plays a role in chemotaxis and cell migration, including responses to injury and wounding. Plays a role in triggering inflammation in response to bacterial lipopolysaccharide (LPS) via its interaction with CD14. Promotes cell proliferation in response to LPA. Inhibits the intracellular ciliogenesis pathway in response to LPA and through AKT1 activation. Required for normal skeleton development. May play a role in osteoblast differentiation. Required for normal brain development. Required for normal proliferation, survival and maturation of newly formed neurons in the adult dentate gyrus. Plays a role in pain perception and in the initiation of neuropathic pain. This Mus musculus (Mouse) protein is Lysophosphatidic acid receptor 1 (Lpar1).